Here is a 419-residue protein sequence, read N- to C-terminus: eIF5-mimic protein 2 (419 aa).

An N-acetylmethionine modification is found at Met-1. Residues 1–15 (MNNQKQQKPTLSGQR) show a composition bias toward polar residues. Residues 1–26 (MNNQKQQKPTLSGQRFKTRKRDEKER) are disordered. Ser-12 bears the Phosphoserine mark. In terms of domain architecture, W2 spans 247-414 (NQQTIGARKE…KNAEEESESE (168 aa)). A Glycyl lysine isopeptide (Lys-Gly) (interchain with G-Cter in SUMO2) cross-link involves residue Lys-368. A phosphoserine mark is found at Ser-411 and Ser-413.

Belongs to the BZW family.

Its function is as follows. Translation initiation regulator which represses repeat-associated non-AUG (RAN) initiated translation probably by acting as a competitive inhibitor of eukaryotic translation initiation factor 5 (EIF5) function. Enhances histone H4 gene transcription but does not seem to bind DNA directly. The protein is eIF5-mimic protein 2 (BZW1) of Pongo abelii (Sumatran orangutan).